A 466-amino-acid polypeptide reads, in one-letter code: 3-isopropylmalate dehydratase large subunit (466 aa).

Cys347, Cys407, and Cys410 together coordinate [4Fe-4S] cluster.

This sequence belongs to the aconitase/IPM isomerase family. LeuC type 1 subfamily. Heterodimer of LeuC and LeuD. Requires [4Fe-4S] cluster as cofactor.

It catalyses the reaction (2R,3S)-3-isopropylmalate = (2S)-2-isopropylmalate. It functions in the pathway amino-acid biosynthesis; L-leucine biosynthesis; L-leucine from 3-methyl-2-oxobutanoate: step 2/4. Catalyzes the isomerization between 2-isopropylmalate and 3-isopropylmalate, via the formation of 2-isopropylmaleate. The polypeptide is 3-isopropylmalate dehydratase large subunit (Shewanella woodyi (strain ATCC 51908 / MS32)).